Consider the following 406-residue polypeptide: Succinylornithine transaminase (406 aa).

The residue at position 252 (K252) is an N6-(pyridoxal phosphate)lysine.

It belongs to the class-III pyridoxal-phosphate-dependent aminotransferase family. AstC subfamily. It depends on pyridoxal 5'-phosphate as a cofactor.

It catalyses the reaction N(2)-succinyl-L-ornithine + 2-oxoglutarate = N-succinyl-L-glutamate 5-semialdehyde + L-glutamate. It participates in amino-acid degradation; L-arginine degradation via AST pathway; L-glutamate and succinate from L-arginine: step 3/5. In terms of biological role, catalyzes the transamination of N(2)-succinylornithine and alpha-ketoglutarate into N(2)-succinylglutamate semialdehyde and glutamate. Can also act as an acetylornithine aminotransferase. The sequence is that of Succinylornithine transaminase from Escherichia coli O157:H7.